Here is a 143-residue protein sequence, read N- to C-terminus: MTTARDIMNAGVTCVGEHETLTAAAQYMREHDIGALPICGDDDRLHGMLTDRDIVIKGLAAGLDPNTATAGELARDSIYYVDANASIQEMLNVMEEHQVRRVPVISEHRLVGIVTEADIARHLPEHAIVQFVKAICSPMALAS.

CBS domains are found at residues 8–65 (MNAG…GLDP) and 73–131 (LARD…IVQF). Cysteines 14 and 39 form a disulfide. 2 residues coordinate Zn(2+): His97 and His122.

In terms of assembly, homodimer.

The protein localises to the secreted. Unlike some other CBS-domain containing proteins does not seem to bind AMP. The sequence is that of Hypoxic response protein 1 (hrp1) from Mycobacterium tuberculosis (strain CDC 1551 / Oshkosh).